The sequence spans 360 residues: tRNA (guanine(37)-N(1))-methyltransferase (360 aa).

Residues R197, 235 to 236, and N283 contribute to the S-adenosyl-L-methionine site; that span reads DL.

The protein belongs to the class I-like SAM-binding methyltransferase superfamily. TRM5/TYW2 family. As to quaternary structure, monomer.

It localises to the mitochondrion matrix. It is found in the nucleus. The protein resides in the cytoplasm. The enzyme catalyses guanosine(37) in tRNA + S-adenosyl-L-methionine = N(1)-methylguanosine(37) in tRNA + S-adenosyl-L-homocysteine + H(+). In terms of biological role, specifically methylates the N1 position of guanosine-37 in various cytoplasmic and mitochondrial tRNAs. Methylation is not dependent on the nature of the nucleoside 5' of the target nucleoside. This is the first step in the biosynthesis of wybutosine (yW), a modified base adjacent to the anticodon of tRNAs and required for accurate decoding. The polypeptide is tRNA (guanine(37)-N(1))-methyltransferase (Encephalitozoon cuniculi (strain GB-M1) (Microsporidian parasite)).